The following is a 974-amino-acid chain: Toxin subunit YenC1 (974 aa).

RHS repeat units lie at residues 165–179 (AGQCLRHYNSAGLNQ), 290–304 (GVLTTYSYEAETQRL), 322–336 (FQDLRYTYDPVGNVL), 354–368 (VPENTYIYDTLYQLV), 398–412 (NYIRNYHYDSAGNLM), 490–504 (SDSETYRYDANSQRV), 570–584 (NDELRYSYDNLIGSS), 596–610 (SQEEYYPYGGTAVWM), and 630–644 (DATGLYYYGFRYYQP). The RHS-repeat associated core domain stretch occupies residues 600–680 (YYPYGGTAVW…PIVLHDPDGL (81 aa)). Positions 699-940 (ISSLKGTGPF…GEVSASTLLE (242 aa)) are cytotoxic necrotising factor domain.

This sequence belongs to the RHS family. Semipurified toxin complex consists of at least YenA1-YenA2-YenB-YenC1-YenC2-Chi1-Chi2. The Yen-TC:K9 subcomplex is about 26 nm tall and 22 nm in diameter with 5-fold symmetry and 5 copies of YenA1, YenA2, Chi1 and Chi2; the chitinase subunits may be solvent accessible on the exterior the complex. The Yen-TC:K9 subcomplex has no insecticidal activity. The native complex with additional YenB, YenC1 and YenC2 subunits is 16 nm taller and is insecticidal; the toxicity-conferring subunits are present at about 1 copy each.

It is found in the secreted. With respect to regulation, toxin complex is secreted when grown at 25 degrees Celsius or less; at higher temperatures the proteins are present intracellularly but not secreted. Its function is as follows. Part of an orally active toxin complex (TC) with strong insecticidal effects on larvae of the Coleoptera Costelytra zealandica, Acrossidius tasmania and Adoryphorus couloni and some Lepidoptera larvae. The TC has an endochitinase activity. In Yersinia entomophaga, this protein is Toxin subunit YenC1.